A 122-amino-acid chain; its full sequence is Large ribosomal subunit protein bL12 (122 aa).

It belongs to the bacterial ribosomal protein bL12 family. Homodimer. Part of the ribosomal stalk of the 50S ribosomal subunit. Forms a multimeric L10(L12)X complex, where L10 forms an elongated spine to which 2 to 4 L12 dimers bind in a sequential fashion. Binds GTP-bound translation factors.

Functionally, forms part of the ribosomal stalk which helps the ribosome interact with GTP-bound translation factors. Is thus essential for accurate translation. The polypeptide is Large ribosomal subunit protein bL12 (Xanthomonas oryzae pv. oryzae (strain MAFF 311018)).